The chain runs to 905 residues: Catenin alpha-2 (905 aa).

Residue threonine 632 is modified to Phosphothreonine. Phosphoserine is present on residues serine 640, serine 651, and serine 853. A compositionally biased stretch (basic and acidic residues) spans valine 869–threonine 879. Residues valine 869 to serine 891 are disordered. A compositionally biased stretch (basic residues) spans arginine 880–isoleucine 890. Serine 891 carries the post-translational modification Phosphoserine.

Belongs to the vinculin/alpha-catenin family. In terms of assembly, interacts with CDH1 and CDH2. Interacts with ZNF639; recruits CTNNA2 to the nucleus. Interacts with F-actin.

The protein localises to the cell membrane. It localises to the cytoplasm. It is found in the cytoskeleton. Its subcellular location is the cell junction. The protein resides in the adherens junction. The protein localises to the cell projection. It localises to the axon. It is found in the nucleus. Its function is as follows. May function as a linker between cadherin adhesion receptors and the cytoskeleton to regulate cell-cell adhesion and differentiation in the nervous system. Required for proper regulation of cortical neuronal migration and neurite growth. It acts as a negative regulator of Arp2/3 complex activity and Arp2/3-mediated actin polymerization. It thereby suppresses excessive actin branching which would impair neurite growth and stability. Regulates morphological plasticity of synapses and cerebellar and hippocampal lamination during development. Functions in the control of startle modulation. The chain is Catenin alpha-2 (CTNNA2) from Pongo abelii (Sumatran orangutan).